The sequence spans 314 residues: uncharacterized protein (314 aa).

Residues 1–18 (MKVSLLIFLIILVGVIKS) form the signal peptide. N-linked (GlcNAc...) asparagine glycans are attached at residues Asn-43, Asn-96, Asn-109, Asn-116, Asn-117, and Asn-161. The interval 252-314 (SMRITKNNPH…PKSIDFHHLF (63 aa)) is disordered. Composition is skewed to low complexity over residues 257–268 (KNNPHLNNNNNN) and 285–296 (KTTTKTSTKTTS).

It localises to the secreted. This is an uncharacterized protein from Dictyostelium discoideum (Social amoeba).